The following is a 60-amino-acid chain: MTCCNQQSSQPKTTTNCAESSCYKKTWRDFRGTRIERGCGCPQVKPGIKLECCHTNECNN.

Disulfide bonds link Cys3/Cys22, Cys17/Cys39, Cys41/Cys52, and Cys53/Cys58.

This sequence belongs to the three-finger toxin family. Short-chain subfamily. Type I alpha-neurotoxin sub-subfamily. In terms of tissue distribution, expressed by the venom gland.

It is found in the secreted. Binds to muscle nicotinic acetylcholine receptor (nAChR) and inhibit acetylcholine from binding to the receptor, thereby impairing neuromuscular transmission. The recombinant protein also barely blocks voltage-gated potassium channel Kv1.3/KCNA3 (2.71% inhibition at 60 nM of toxin). This Hydrophis lapemoides (Persian gulf sea snake) protein is Short neurotoxin 1.